Here is a 385-residue protein sequence, read N- to C-terminus: WD repeat-containing protein 74 (385 aa).

6 WD repeats span residues 40–80 (RREE…FQGQ), 83–122 (CPGG…TSSD), 128–168 (RVGP…EPVF), 179–220 (DLRV…RRPV), 224–266 (TYGE…GCLK), and 267–306 (GLAG…GLEH). Residue S214 is modified to Phosphoserine. Residue K311 is modified to N6-methyllysine. A required for nucleolar and nuclear location region spans residues 320–385 (SGRDNWEDEP…KKKRPGSTSP (66 aa)). Disordered regions lie at residues 323 to 345 (DNWE…DTET) and 360 to 385 (LSGL…STSP). S361 bears the Phosphoserine mark. The segment covering 372–385 (TRRRKKKRPGSTSP) has biased composition (basic residues).

As to quaternary structure, isoform 1 interacts (through WDR repeats) with NVL; the interaction is independent of RNA or pre-60S ribosome particles. Isoform 2 does not interact with NVL. Interacts with MTREX; the interaction dissociation in a late stage of rRNA synthesis is required for appropriate maturation of pre-60S particles and depends on the ATPase activity of NVL.

The protein localises to the nucleus. It is found in the nucleolus. In terms of biological role, regulatory protein of the MTREX-exosome complex involved in the synthesis of the 60S ribosomal subunit. Participates in an early cleavage of the pre-rRNA processing pathway in cooperation with NVL. Required for blastocyst formation, is necessary for RNA transcription, processing and/or stability during preimplantation development. The sequence is that of WD repeat-containing protein 74 (WDR74) from Homo sapiens (Human).